A 418-amino-acid polypeptide reads, in one-letter code: MALAKKTIKKVVLAYSGGLDTSAIIPWLKENYDGCEVIAFCADVGQGDEELEGVKEKAIASGASECYVVDLKEEYVKEYIYPILKTGSVYEGQYLLGTSMARPIIAKAHIEVALKVGADAVCHGCTGKGNDQVRFESCFAALAPELTVIAPWREWDMVSREDLLDYLAERNIPCAASLTKIYSRDANAWHISHEGGELEDPWCEPSKEVWTMTVDPMDAPDVPEKVQLSFKEGELVGIDGKDFSQHGAGAYEALMYLNEKGSAHGVGRIDIVENRLVGMKSRGCYETPGGTILMAAYKGLETLILDKESLKYRESVGLEFSHVIYDGRWFTPLAKAQLASAASFAEKLTGDVVVKLYKGMAQVIQRRSPNSLYSEAFATFGADDVYDQKHAEGFIRLFSLSSRITALSQKDSLKDKAE.

ATP-binding positions include 14–22 (AYSGGLDTS) and A42. Residues Y94 and S99 each contribute to the L-citrulline site. Residue G124 participates in ATP binding. L-aspartate is bound by residues T126, N130, and D131. N130 provides a ligand contact to L-citrulline. L-citrulline contacts are provided by R134, S183, S192, E273, and Y285.

Belongs to the argininosuccinate synthase family. Type 1 subfamily. In terms of assembly, homotetramer.

It localises to the cytoplasm. The enzyme catalyses L-citrulline + L-aspartate + ATP = 2-(N(omega)-L-arginino)succinate + AMP + diphosphate + H(+). Its pathway is amino-acid biosynthesis; L-arginine biosynthesis; L-arginine from L-ornithine and carbamoyl phosphate: step 2/3. In Colwellia psychrerythraea (strain 34H / ATCC BAA-681) (Vibrio psychroerythus), this protein is Argininosuccinate synthase.